A 209-amino-acid polypeptide reads, in one-letter code: Pyrrolidone-carboxylate peptidase (209 aa).

Residues glutamate 79, cysteine 142, and histidine 164 contribute to the active site.

It belongs to the peptidase C15 family. Homotetramer.

It localises to the cytoplasm. It carries out the reaction Release of an N-terminal pyroglutamyl group from a polypeptide, the second amino acid generally not being Pro.. In terms of biological role, removes 5-oxoproline from various penultimate amino acid residues except L-proline. The polypeptide is Pyrrolidone-carboxylate peptidase (Saccharolobus islandicus (strain L.S.2.15 / Lassen #1) (Sulfolobus islandicus)).